The sequence spans 897 residues: uncharacterized protein (897 aa).

Disordered regions lie at residues 25–89 (RLQD…TRKR) and 106–168 (PTRL…TPPS). Low complexity-rich tracts occupy residues 32 to 44 (SSSP…SSSS), 57 to 68 (SLQNSQSSSYSL), and 106 to 142 (PTRL…SSVS). Positions 263-446 (SMEQSSKCGG…YSLLKFLRIK (184 aa)) constitute a Helicase ATP-binding domain. Residue 276–283 (DDMGLGKT) coordinates ATP. Residues 397 to 400 (DEAH) carry the DEAH box motif. The segment at 606-655 (CSVCLDPCLAPVFIIPCGHFTCQECMSMLVGQKYGSSSTSTIIAKCPMCR) adopts an RING-type zinc-finger fold. Residues 727–890 (QARQTILDII…LSRLDKEELL (164 aa)) form the Helicase C-terminal domain.

The protein belongs to the SNF2/RAD54 helicase family.

It is found in the cytoplasm. It localises to the nucleus. This is an uncharacterized protein from Schizosaccharomyces pombe (strain 972 / ATCC 24843) (Fission yeast).